A 201-amino-acid chain; its full sequence is 3-isopropylmalate dehydratase small subunit (201 aa).

It belongs to the LeuD family. LeuD type 1 subfamily. Heterodimer of LeuC and LeuD.

It carries out the reaction (2R,3S)-3-isopropylmalate = (2S)-2-isopropylmalate. It functions in the pathway amino-acid biosynthesis; L-leucine biosynthesis; L-leucine from 3-methyl-2-oxobutanoate: step 2/4. Functionally, catalyzes the isomerization between 2-isopropylmalate and 3-isopropylmalate, via the formation of 2-isopropylmaleate. This is 3-isopropylmalate dehydratase small subunit from Sinorhizobium fredii (strain NBRC 101917 / NGR234).